A 349-amino-acid polypeptide reads, in one-letter code: Homeobox protein engrailed (349 aa).

Disordered stretches follow at residues 26-53 (DGPS…SPLS), 146-210 (GKET…PLPP), 228-252 (PSSG…EKRP), and 327-349 (STIP…ARIE). 2 stretches are compositionally biased toward basic and acidic residues: residues 173-188 (QMKK…RTES) and 242-252 (DKAITPDEKRP). Positions 249–308 (EKRPRTAFTAEQLSRLKHEFNENRYLTERRRQDLARELGLHENQIKIWFQNNRAKLKKSS) form a DNA-binding region, homeobox.

The protein belongs to the engrailed homeobox family.

It is found in the nucleus. This is Homeobox protein engrailed from Artemia franciscana (Brine shrimp).